We begin with the raw amino-acid sequence, 309 residues long: Taste receptor type 2 member 8 (309 aa).

Over 1–7 the chain is Extracellular; it reads MFSPADN. Residues 8-28 traverse the membrane as a helical segment; that stretch reads IFIILITGEFILGILGNGYIA. Over 29–50 the chain is Cytoplasmic; sequence LVNWIDWIKKKKISTVDYILTN. Residues 51 to 71 traverse the membrane as a helical segment; sequence LVIARICLISVMVVNGIVIVL. Topologically, residues 72–82 are extracellular; it reads NPDVYTKNKQQ. The helical transmembrane segment at 83-103 threads the bilayer; that stretch reads IVIFTFWTFANYLNMWITTCL. The Cytoplasmic segment spans residues 104–131; sequence NVFYFLKIASSSHPLFLWLKWKIDMVVH. Residues 132–152 traverse the membrane as a helical segment; sequence WILLGCFAISLLVSLIAAIVL. Over 153–184 the chain is Extracellular; it reads SCDYRFHAIAKHKRNITEMFHVSKXPYFEPLT. Asparagine 167 is a glycosylation site (N-linked (GlcNAc...) asparagine). The helical transmembrane segment at 185 to 205 threads the bilayer; sequence LFNLFAIVPFIVSLISFFLLV. Over 206 to 239 the chain is Cytoplasmic; that stretch reads RSLWRHTKQIKLYATGSRDPSTEVHVRAIKTMTS. Residues 240-260 traverse the membrane as a helical segment; it reads FIFFFFLYFISSILMTFSYLM. Residues 261–266 lie on the Extracellular side of the membrane; sequence TKYKLA. A helical transmembrane segment spans residues 267 to 287; it reads VEFGEIAAILYPLGHSLILIV. At 288-309 the chain is on the cytoplasmic side; sequence LNNKLRQIFVRMLTCRKIACVI.

The protein belongs to the G-protein coupled receptor T2R family.

The protein resides in the membrane. In terms of biological role, receptor that may play a role in the perception of bitterness and is gustducin-linked. May play a role in sensing the chemical composition of the gastrointestinal content. The activity of this receptor may stimulate alpha gustducin, mediate PLC-beta-2 activation and lead to the gating of TRPM5. In Pan paniscus (Pygmy chimpanzee), this protein is Taste receptor type 2 member 8 (TAS2R8).